A 333-amino-acid chain; its full sequence is MRPFLMILSVTYIASAESPAKTHVRHHNRYHSHSPLKSNLRKTYNSPRLDKPLSDIGITDARRVPPVYISGNSSPLVADVGPDSGESGVVLAPSIDGSSEGNIGIYVSPSRDGQGIGSRERLISLHHLIHHAQGEALKASAISSAAKLEASALLAQRQELNAKIMANRAAMLQEEEQRLVAQRSSNPLILVKDTVPVANVANNNLSFEHHNELLNKKLDMIKKDQDEAIKRAENLARLHKARTQILPDSLVASDPKQFKDFVDGGPAQDLTFEVPVDPSIGNYYVSSDPGENLQTNKAPLTTGDLPYFIAHSNENGVFSPYGSLSNGESVAQA.

Positions 1–16 (MRPFLMILSVTYIASA) are cleaved as a signal peptide. A glycan (N-linked (GlcNAc...) asparagine) is linked at N204.

This is an uncharacterized protein from Encephalitozoon cuniculi (strain GB-M1) (Microsporidian parasite).